Consider the following 236-residue polypeptide: 3-oxoacyl-[acyl-carrier-protein] reductase (236 aa).

M1 bears the N-acetylmethionine mark. Residues 11–14 (SRGI) and 34–35 (RN) contribute to the NADP(+) site. The residue at position 40 (K40) is an N6-acetyllysine. 83 to 85 (AAG) serves as a coordination point for NADP(+). K96 bears the N6-acetyllysine mark. S134 serves as a coordination point for substrate. NADP(+)-binding positions include Y147, K151, and 180 to 182 (IHT). Y147 serves as the catalytic Proton acceptor. K194 is subject to N6-acetyllysine.

The protein belongs to the short-chain dehydrogenases/reductases (SDR) family. In terms of assembly, homotetramer (in vitro). Heterotetramer with HSD17B8; contains two molecules each of HSD17B8 and CBR4. Does not form homotetramers when HSD17B8 is coexpressed, only heterotetramers (in vitro).

The protein resides in the mitochondrion matrix. The catalysed reaction is a (3R)-hydroxyacyl-[ACP] + NADP(+) = a 3-oxoacyl-[ACP] + NADPH + H(+). It catalyses the reaction a quinone + NADPH + H(+) = a quinol + NADP(+). The protein operates within lipid metabolism; fatty acid biosynthesis. Its function is as follows. Component of the heterotetramer complex KAR (3-ketoacyl-[acyl carrier protein] reductase or 3-ketoacyl-[ACP] reductase) that forms part of the mitochondrial fatty acid synthase (mtFAS). Beta-subunit of the KAR heterotetramer complex, responsible for the 3-ketoacyl-ACP reductase activity of the mtFAS, reduces 3-oxoacyl-[ACP] to (3R)-hydroxyacyl-[ACP] in a NADPH-dependent manner with no chain length preference, thereby participating in mitochondrial fatty acid biosynthesis. The homotetramer has NADPH-dependent quinone reductase activity (in vitro), hence could play a role in protection against cytotoxicity of exogenous quinones. As a heterotetramer, it can also reduce 9,10-phenanthrenequinone, 1,4-benzoquinone and various other o-quinones and p-quinones (in vitro). The chain is 3-oxoacyl-[acyl-carrier-protein] reductase (Cbr4) from Rattus norvegicus (Rat).